Here is a 331-residue protein sequence, read N- to C-terminus: Induced myeloid leukemia cell differentiation protein Mcl-1 homolog (331 aa).

The interval 85–156 (LAVPPEEMAA…PPEEEEDDLY (72 aa)) is PEST-like. S102 is subject to Phosphoserine. K117 is covalently cross-linked (Glycyl lysine isopeptide (Lys-Gly) (interchain with G-Cter in ubiquitin)). The tract at residues 130–154 (EAAKSSGADGSLPSTPPPPEEEEDD) is disordered. At S140 the chain carries Phosphoserine; by GSK3-alpha and GSK3-beta. S143 is modified (phosphoserine). Residue T144 is modified to Phosphothreonine; by MAPK. Residues K175 and K178 each participate in a glycyl lysine isopeptide (Lys-Gly) (interchain with G-Cter in ubiquitin) cross-link. The short motif at 190–204 (ALETLRRVGDGVQRN) is the BH3 element. The BH1 signature appears at 234-253 (VFKDGVTNWGRIVTLISFGA). The BH2 signature appears at 285–300 (DWLVKQRGWDGFVEFF). The helical transmembrane segment at 308–330 (GIRNVLLAFAGVAGVGAGLAYLI) threads the bilayer.

Belongs to the Bcl-2 family. In terms of assembly, interacts with HIF3A isoform 2 (via C-terminus domain). Interacts with BAD, BOK, BIK, BAX, BAK1, and TPT1. Interacts with BBC3, BMF and PMAIP1. Interacts with BOP. Interacts with BCL2L11; this interaction may sequester BCL2L11 and prevent its pro-apoptotic activity. Interacts with GIMAP5 and HSPA8/HSC70; the interaction between HSPA8 and MCL1 is impaired in the absence of GIMAP5. In terms of processing, cleaved by CASP3 during apoptosis, yielding a pro-apoptotic C-terminal fragment. Rapidly degraded in the absence of phosphorylation in the PEST region. Post-translationally, phosphorylated on Ser-140, by GSK3, in response to IL3/interleukin-3 withdrawal. Phosphorylation at Ser-140 induces ubiquitination and proteasomal degradation, abrogating the anti-apoptotic activity. Treatment with taxol or okadaic acid induces phosphorylation on additional sites. In terms of processing, ubiquitinated. Ubiquitination is induced by phosphorylation at Ser-140. Deubiquitinated by USP20; leading to increased stability.

It is found in the membrane. The protein localises to the cytoplasm. The protein resides in the mitochondrion. It localises to the nucleus. Its subcellular location is the nucleoplasm. Its function is as follows. Involved in the regulation of apoptosis versus cell survival, and in the maintenance of viability but not of proliferation. Mediates its effects by interactions with a number of other regulators of apoptosis. Isoform 2 has antiapoptotic activity. In Mus musculus (Mouse), this protein is Induced myeloid leukemia cell differentiation protein Mcl-1 homolog (Mcl1).